The chain runs to 145 residues: D-aminoacyl-tRNA deacylase (145 aa).

A Gly-cisPro motif, important for rejection of L-amino acids motif is present at residues 137–138 (GP).

The protein belongs to the DTD family. Homodimer.

It is found in the cytoplasm. The enzyme catalyses glycyl-tRNA(Ala) + H2O = tRNA(Ala) + glycine + H(+). The catalysed reaction is a D-aminoacyl-tRNA + H2O = a tRNA + a D-alpha-amino acid + H(+). Functionally, an aminoacyl-tRNA editing enzyme that deacylates mischarged D-aminoacyl-tRNAs. Also deacylates mischarged glycyl-tRNA(Ala), protecting cells against glycine mischarging by AlaRS. Acts via tRNA-based rather than protein-based catalysis; rejects L-amino acids rather than detecting D-amino acids in the active site. By recycling D-aminoacyl-tRNA to D-amino acids and free tRNA molecules, this enzyme counteracts the toxicity associated with the formation of D-aminoacyl-tRNA entities in vivo and helps enforce protein L-homochirality. In Colwellia psychrerythraea (strain 34H / ATCC BAA-681) (Vibrio psychroerythus), this protein is D-aminoacyl-tRNA deacylase.